Reading from the N-terminus, the 303-residue chain is Taste receptor type 2 member 13 (303 aa).

Residues 1–7 lie on the Extracellular side of the membrane; the sequence is MKSALPS. The helical transmembrane segment at 8-28 threads the bilayer; sequence IFTLVIIAEFIIGNLSNGFIV. Over 29–55 the chain is Cytoplasmic; that stretch reads LINCIDWVSKRELSSVDKLLIILAISR. Residues 56 to 76 form a helical membrane-spanning segment; the sequence is IGLIWEILVSWFLALHYLAIF. Residues 77–85 lie on the Extracellular side of the membrane; it reads VSGTGLRIM. Residues 86 to 106 form a helical membrane-spanning segment; the sequence is IFSWIVSNHFNLWLATILSIF. The Cytoplasmic portion of the chain corresponds to 107–128; the sequence is YLLKIASFSSPAFLYLKWRVNK. Residues 129 to 149 form a helical membrane-spanning segment; that stretch reads VILLILLGTLVFLFLNLIQIN. Residues 150–184 lie on the Extracellular side of the membrane; that stretch reads MHIKDWLDRYERNTTWNFSMSDFETFSVSVKFTMT. 2 N-linked (GlcNAc...) asparagine glycosylation sites follow: asparagine 162 and asparagine 166. Residues 185–205 traverse the membrane as a helical segment; that stretch reads MFSLTPFTVAFISFLLLIFSL. The Cytoplasmic segment spans residues 206-232; the sequence is QKHLQKMQLNYKGHRDPKTKVHTNALK. The helical transmembrane segment at 233-253 threads the bilayer; the sequence is IVISFLLFYASFFLCVLXSWI. At 254 to 261 the chain is on the extracellular side; the sequence is SELYQNTV. A helical membrane pass occupies residues 262–282; sequence IYMLCETIGVFYPSSHSFLLI. Residues 283 to 303 are Cytoplasmic-facing; sequence LGNAKLRQAFLLVAAKVWAKR.

This sequence belongs to the G-protein coupled receptor T2R family.

Its subcellular location is the membrane. Its function is as follows. Receptor that may play a role in the perception of bitterness and is gustducin-linked. May play a role in sensing the chemical composition of the gastrointestinal content. The activity of this receptor may stimulate alpha gustducin, mediate PLC-beta-2 activation and lead to the gating of TRPM5. The chain is Taste receptor type 2 member 13 (TAS2R13) from Gorilla gorilla gorilla (Western lowland gorilla).